Reading from the N-terminus, the 357-residue chain is Protein RecA (357 aa).

Residue 67–74 coordinates ATP; sequence GPESSGKT.

Belongs to the RecA family.

The protein resides in the cytoplasm. In terms of biological role, can catalyze the hydrolysis of ATP in the presence of single-stranded DNA, the ATP-dependent uptake of single-stranded DNA by duplex DNA, and the ATP-dependent hybridization of homologous single-stranded DNAs. It interacts with LexA causing its activation and leading to its autocatalytic cleavage. The chain is Protein RecA from Shewanella oneidensis (strain ATCC 700550 / JCM 31522 / CIP 106686 / LMG 19005 / NCIMB 14063 / MR-1).